Reading from the N-terminus, the 265-residue chain is Type III pantothenate kinase (265 aa).

9-16 lines the ATP pocket; it reads DAGNSRIK. Residues Y96 and 103 to 106 contribute to the substrate site; that span reads GSDR. Residue D105 is the Proton acceptor of the active site. An ATP-binding site is contributed by T129. T189 serves as a coordination point for substrate.

The protein belongs to the type III pantothenate kinase family. Homodimer. Requires NH4(+) as cofactor. It depends on K(+) as a cofactor.

It localises to the cytoplasm. It catalyses the reaction (R)-pantothenate + ATP = (R)-4'-phosphopantothenate + ADP + H(+). The protein operates within cofactor biosynthesis; coenzyme A biosynthesis; CoA from (R)-pantothenate: step 1/5. Catalyzes the phosphorylation of pantothenate (Pan), the first step in CoA biosynthesis. The sequence is that of Type III pantothenate kinase from Burkholderia orbicola (strain AU 1054).